Here is a 220-residue protein sequence, read N- to C-terminus: METPTPRVKPGFNGVGVGMGSSVNGSSRRAGYYMGPAGAVAVAGGGRAAAAAPVDGCSVALRVFVLAATLVSAVVMGVDRQTSTIRITVTDALPPLEVPLTANWSYSSAFVYFVVANAMVCLFSAAALAACRSRAAMVPVMVGDLLALALLYSAVGAAAEFGILGERGNSHVRWPKVCNVYGRFCERAMAAVIVSLIAAFANLVLLMLNILTIHKSSSYY.

Residues 1–57 lie on the Cytoplasmic side of the membrane; the sequence is METPTPRVKPGFNGVGVGMGSSVNGSSRRAGYYMGPAGAVAVAGGGRAAAAAPVDGC. The chain crosses the membrane as a helical span at residues 58 to 78; the sequence is SVALRVFVLAATLVSAVVMGV. Over 79-108 the chain is Extracellular; that stretch reads DRQTSTIRITVTDALPPLEVPLTANWSYSS. A glycan (N-linked (GlcNAc...) asparagine) is linked at Asn103. The helical transmembrane segment at 109 to 129 threads the bilayer; the sequence is AFVYFVVANAMVCLFSAAALA. At 130–144 the chain is on the cytoplasmic side; that stretch reads ACRSRAAMVPVMVGD. Residues 145–165 form a helical membrane-spanning segment; sequence LLALALLYSAVGAAAEFGILG. The Extracellular segment spans residues 166–187; it reads ERGNSHVRWPKVCNVYGRFCER. The helical transmembrane segment at 188–208 threads the bilayer; the sequence is AMAAVIVSLIAAFANLVLLML. At 209-220 the chain is on the cytoplasmic side; the sequence is NILTIHKSSSYY.

Belongs to the Casparian strip membrane proteins (CASP) family. In terms of assembly, homodimer and heterodimers.

The protein resides in the cell membrane. This is CASP-like protein 1E1 from Zea mays (Maize).